A 302-amino-acid polypeptide reads, in one-letter code: Heme A synthase (302 aa).

The Cytoplasmic portion of the chain corresponds to 1 to 8 (MFRKQNLK). Residues 9–29 (WLGVLATIIMTFVQLGGALVT) traverse the membrane as a helical segment. At 30–67 (KTGSEDGCGSSWPLCNGALLPENLPIQTIIELSHRAVS) the chain is on the extracellular side. An intrachain disulfide couples Cys37 to Cys44. Residue Glu60 is part of the active site. His63 contributes to the heme o binding site. The helical transmembrane segment at 68–88 (AISLIVVLWLVITAWKNIGYI) threads the bilayer. Topologically, residues 89 to 93 (KEIKP) are cytoplasmic. A helical transmembrane segment spans residues 94–114 (LSIISVGFLLVQALVGAAAVI). At 115–125 (WQQNPYVLALH) the chain is on the extracellular side. His125 provides a ligand contact to heme o. A helical membrane pass occupies residues 126–146 (FGISLISFSSVFLMTLIIFSI). The Cytoplasmic portion of the chain corresponds to 147–161 (DKKYEADILFIHKPL). A helical membrane pass occupies residues 162–182 (RILTWLMAIIVYLTIYTGALV). Over 183 to 215 (RHTKSSLAYGAWPIPFDDIVPHNAHDWVQFSHR) the chain is Extracellular. His214 lines the heme b pocket. Residues 216-236 (GMALITFIWIMITFIHAIKNY) traverse the membrane as a helical segment. Over 237 to 244 (SDNRTVRY) the chain is Cytoplasmic. The chain crosses the membrane as a helical span at residues 245–265 (GYTASFILVILQVITGALSVI). The Extracellular segment spans residues 266 to 270 (TNVNL). A helical transmembrane segment spans residues 271-291 (IIALFHALFITYLFGMIAYFI). Residue His276 participates in heme b binding. Residues 292–302 (LLMLRTTRSQK) lie on the Cytoplasmic side of the membrane.

It belongs to the COX15/CtaA family. Type 1 subfamily. As to quaternary structure, interacts with CtaB. Heme b serves as cofactor.

It localises to the cell membrane. The enzyme catalyses Fe(II)-heme o + 2 A + H2O = Fe(II)-heme a + 2 AH2. The protein operates within porphyrin-containing compound metabolism; heme A biosynthesis; heme A from heme O: step 1/1. In terms of biological role, catalyzes the conversion of heme O to heme A by two successive hydroxylations of the methyl group at C8. The first hydroxylation forms heme I, the second hydroxylation results in an unstable dihydroxymethyl group, which spontaneously dehydrates, resulting in the formyl group of heme A. The sequence is that of Heme A synthase from Staphylococcus epidermidis (strain ATCC 35984 / DSM 28319 / BCRC 17069 / CCUG 31568 / BM 3577 / RP62A).